The primary structure comprises 352 residues: Cell division protein ZipA (352 aa).

Over 1–5 (MQELR) the chain is Periplasmic. A helical membrane pass occupies residues 6–26 (LVLIIVGALAISALLLHGLWT). The Cytoplasmic segment spans residues 27-352 (SRKEKPAKFG…REKAKLYSQA (326 aa)). The segment covering 35-54 (FGEKPLGKLDDSNRDTEGFD) has biased composition (basic and acidic residues). Residues 35-56 (FGEKPLGKLDDSNRDTEGFDHT) form a disordered region.

It belongs to the ZipA family. As to quaternary structure, interacts with FtsZ via their C-terminal domains.

It localises to the cell inner membrane. Its function is as follows. Essential cell division protein that stabilizes the FtsZ protofilaments by cross-linking them and that serves as a cytoplasmic membrane anchor for the Z ring. Also required for the recruitment to the septal ring of downstream cell division proteins. The chain is Cell division protein ZipA from Photobacterium profundum (strain SS9).